Reading from the N-terminus, the 74-residue chain is U5-theraphotoxin-Cg1a (74 aa).

The first 19 residues, 1-19, serve as a signal peptide directing secretion; that stretch reads MNATIFALLLLLNLAMYNA. The propeptide occupies 20 to 39; it reads AEQSSETDMDDTLLIPENYR. 3 cysteine pairs are disulfide-bonded: Cys-42-Cys-56, Cys-49-Cys-61, and Cys-55-Cys-71.

It belongs to the neurotoxin 36 family. 01 subfamily. In terms of tissue distribution, expressed by the venom gland.

The protein localises to the secreted. Probable ion channel inhibitor. The polypeptide is U5-theraphotoxin-Cg1a (Chilobrachys guangxiensis (Chinese earth tiger tarantula)).